A 267-amino-acid chain; its full sequence is tRNA pseudouridine synthase A (267 aa).

Asp-55 functions as the Nucleophile in the catalytic mechanism. Tyr-109 contributes to the substrate binding site.

It belongs to the tRNA pseudouridine synthase TruA family.

It catalyses the reaction uridine(38/39/40) in tRNA = pseudouridine(38/39/40) in tRNA. Its function is as follows. Formation of pseudouridine at positions 38, 39 and 40 in the anticodon stem and loop of transfer RNAs. The polypeptide is tRNA pseudouridine synthase A (Natronomonas pharaonis (strain ATCC 35678 / DSM 2160 / CIP 103997 / JCM 8858 / NBRC 14720 / NCIMB 2260 / Gabara) (Halobacterium pharaonis)).